The sequence spans 417 residues: MDFAPELITIGQKAKDAARKLAYAGTAAKNKALLAMAEALLNHEQKILEANRKDVEAAIQKGTKKSLVNRLALTSEGIRQMSDALKEVVNLGDPVGEGEFWTRPNGLRIQRTRVPLGVVAMIYEARPNVTVDAAALCLKSGNAVILRGGSEAIESNKILSKVIAGAAESQGMPTACIQLLENTNRQWVQQLMKMNGYVDVIIPRGGAGLIETVVKEATVPVIETGTGVCHAYVDGEADLAKGVSIVFNAKTQKPGVCNALEAVLVNEAVAQEFLPLLGEKFRDYGVEIRGCEKTCAILPYAAKAKEEDWGIEHLDLIISAKVVQGVDEAMDHIYQYGTKHSETIITENYTTAQRFLNEVDAAAVYVNASTRFTDGGRFGFGAEIGISTQKLHARGPMGLQALTTMKYMVYGEDHIVT.

The protein belongs to the gamma-glutamyl phosphate reductase family.

The protein localises to the cytoplasm. It catalyses the reaction L-glutamate 5-semialdehyde + phosphate + NADP(+) = L-glutamyl 5-phosphate + NADPH + H(+). It participates in amino-acid biosynthesis; L-proline biosynthesis; L-glutamate 5-semialdehyde from L-glutamate: step 2/2. Its function is as follows. Catalyzes the NADPH-dependent reduction of L-glutamate 5-phosphate into L-glutamate 5-semialdehyde and phosphate. The product spontaneously undergoes cyclization to form 1-pyrroline-5-carboxylate. The chain is Gamma-glutamyl phosphate reductase from Desulfitobacterium hafniense (strain DSM 10664 / DCB-2).